Consider the following 156-residue polypeptide: ATP synthase subunit b (156 aa).

A helical membrane pass occupies residues 7–27; that stretch reads LFLQAVVFAILVWFTMKFVWP.

Belongs to the ATPase B chain family. As to quaternary structure, F-type ATPases have 2 components, F(1) - the catalytic core - and F(0) - the membrane proton channel. F(1) has five subunits: alpha(3), beta(3), gamma(1), delta(1), epsilon(1). F(0) has three main subunits: a(1), b(2) and c(10-14). The alpha and beta chains form an alternating ring which encloses part of the gamma chain. F(1) is attached to F(0) by a central stalk formed by the gamma and epsilon chains, while a peripheral stalk is formed by the delta and b chains.

The protein localises to the cell inner membrane. F(1)F(0) ATP synthase produces ATP from ADP in the presence of a proton or sodium gradient. F-type ATPases consist of two structural domains, F(1) containing the extramembraneous catalytic core and F(0) containing the membrane proton channel, linked together by a central stalk and a peripheral stalk. During catalysis, ATP synthesis in the catalytic domain of F(1) is coupled via a rotary mechanism of the central stalk subunits to proton translocation. Functionally, component of the F(0) channel, it forms part of the peripheral stalk, linking F(1) to F(0). This Polaromonas naphthalenivorans (strain CJ2) protein is ATP synthase subunit b.